Consider the following 104-residue polypeptide: Large ribosomal subunit protein uL24 (104 aa).

This sequence belongs to the universal ribosomal protein uL24 family. In terms of assembly, part of the 50S ribosomal subunit.

Functionally, one of two assembly initiator proteins, it binds directly to the 5'-end of the 23S rRNA, where it nucleates assembly of the 50S subunit. One of the proteins that surrounds the polypeptide exit tunnel on the outside of the subunit. In Erwinia tasmaniensis (strain DSM 17950 / CFBP 7177 / CIP 109463 / NCPPB 4357 / Et1/99), this protein is Large ribosomal subunit protein uL24.